Consider the following 162-residue polypeptide: MERFFENAMYASRWLLAPIYMGLSLALLALTIKFFQEIFHVIPNIFAMAEADLILVLLSLIDMALVGGLLVMVMISGYENFVSQLDIDEGKEKLNWLGKMDSGSLKNKVAASIVAISSIHLLRIFMDAKNVPDNKLMWYVIIHMTFVLSAFAMGYLDKQTRH.

The next 3 helical transmembrane spans lie at 15–35 (LLAP…IKFF), 53–73 (LILV…LVMV), and 136–156 (LMWY…MGYL).

Belongs to the UPF0114 family.

It is found in the cell membrane. The chain is UPF0114 protein PSPA7_5214 from Pseudomonas paraeruginosa (strain DSM 24068 / PA7) (Pseudomonas aeruginosa (strain PA7)).